Consider the following 312-residue polypeptide: Ribosomal RNA small subunit methyltransferase H (312 aa).

Residues 32–34 (AGH), Asp-52, Phe-79, Asp-100, and Gln-107 each bind S-adenosyl-L-methionine.

It belongs to the methyltransferase superfamily. RsmH family.

The protein resides in the cytoplasm. The catalysed reaction is cytidine(1402) in 16S rRNA + S-adenosyl-L-methionine = N(4)-methylcytidine(1402) in 16S rRNA + S-adenosyl-L-homocysteine + H(+). In terms of biological role, specifically methylates the N4 position of cytidine in position 1402 (C1402) of 16S rRNA. The protein is Ribosomal RNA small subunit methyltransferase H of Listeria monocytogenes serotype 4b (strain F2365).